The primary structure comprises 483 residues: Altronate oxidoreductase (483 aa).

18–29 (IIQFGEGNFLRA) contacts NAD(+).

It belongs to the mannitol dehydrogenase family. UxaB subfamily.

The enzyme catalyses D-altronate + NAD(+) = keto-D-tagaturonate + NADH + H(+). The protein operates within carbohydrate metabolism; pentose and glucuronate interconversion. This Escherichia coli O17:K52:H18 (strain UMN026 / ExPEC) protein is Altronate oxidoreductase.